A 1012-amino-acid polypeptide reads, in one-letter code: DNA polymerase catalytic subunit (1012 aa).

Belongs to the DNA polymerase type-B family.

It is found in the host nucleus. It catalyses the reaction DNA(n) + a 2'-deoxyribonucleoside 5'-triphosphate = DNA(n+1) + diphosphate. The chain is DNA polymerase catalytic subunit (U38) from Human herpesvirus 6A (strain Uganda-1102) (HHV-6 variant A).